The following is a 314-amino-acid chain: Protoheme IX farnesyltransferase (314 aa).

8 helical membrane passes run 36 to 56 (IGIV…AISF), 65 to 85 (WGTF…GCIV), 114 to 134 (SVLT…MFTS), 135 to 155 (WYAT…YTIW), 179 to 199 (WAAI…IMFI), 237 to 257 (IIVY…TMGI), 259 to 279 (FAVI…TGLF), and 290 to 310 (IFIF…IVKL).

Belongs to the UbiA prenyltransferase family. Protoheme IX farnesyltransferase subfamily. Interacts with CtaA.

Its subcellular location is the cell membrane. The enzyme catalyses heme b + (2E,6E)-farnesyl diphosphate + H2O = Fe(II)-heme o + diphosphate. It functions in the pathway porphyrin-containing compound metabolism; heme O biosynthesis; heme O from protoheme: step 1/1. Functionally, converts heme B (protoheme IX) to heme O by substitution of the vinyl group on carbon 2 of heme B porphyrin ring with a hydroxyethyl farnesyl side group. This Oceanobacillus iheyensis (strain DSM 14371 / CIP 107618 / JCM 11309 / KCTC 3954 / HTE831) protein is Protoheme IX farnesyltransferase.